A 210-amino-acid polypeptide reads, in one-letter code: N-(5'-phosphoribosyl)anthranilate isomerase (210 aa).

The protein belongs to the TrpF family.

It catalyses the reaction N-(5-phospho-beta-D-ribosyl)anthranilate = 1-(2-carboxyphenylamino)-1-deoxy-D-ribulose 5-phosphate. The protein operates within amino-acid biosynthesis; L-tryptophan biosynthesis; L-tryptophan from chorismate: step 3/5. The chain is N-(5'-phosphoribosyl)anthranilate isomerase from Staphylococcus aureus (strain bovine RF122 / ET3-1).